A 130-amino-acid polypeptide reads, in one-letter code: Protein ApaG (130 aa).

Residues 3 to 127 form the ApaG domain; the sequence is RALTKDIEVV…FSLDSPGLLR (125 aa).

The protein is Protein ApaG of Rhizobium leguminosarum bv. trifolii (strain WSM2304).